The following is a 338-amino-acid chain: Dihydroorotate dehydrogenase (quinone) (338 aa).

Residues 68–72 (AGMDK) and T92 contribute to the FMN site. Residue K72 coordinates substrate. 117–121 (NRMGF) provides a ligand contact to substrate. Positions 147 and 180 each coordinate FMN. N180 provides a ligand contact to substrate. The active-site Nucleophile is S183. N185 contacts substrate. Residues K214 and T242 each coordinate FMN. Residue 243–244 (NT) coordinates substrate. FMN-binding positions include G267, G296, and 317–318 (YT).

It belongs to the dihydroorotate dehydrogenase family. Type 2 subfamily. As to quaternary structure, monomer. FMN is required as a cofactor.

The protein resides in the cell membrane. The catalysed reaction is (S)-dihydroorotate + a quinone = orotate + a quinol. Its pathway is pyrimidine metabolism; UMP biosynthesis via de novo pathway; orotate from (S)-dihydroorotate (quinone route): step 1/1. In terms of biological role, catalyzes the conversion of dihydroorotate to orotate with quinone as electron acceptor. The chain is Dihydroorotate dehydrogenase (quinone) from Salinispora arenicola (strain CNS-205).